We begin with the raw amino-acid sequence, 258 residues long: Indole-3-glycerol phosphate synthase (258 aa).

Belongs to the TrpC family.

It catalyses the reaction 1-(2-carboxyphenylamino)-1-deoxy-D-ribulose 5-phosphate + H(+) = (1S,2R)-1-C-(indol-3-yl)glycerol 3-phosphate + CO2 + H2O. It participates in amino-acid biosynthesis; L-tryptophan biosynthesis; L-tryptophan from chorismate: step 4/5. In Campylobacter jejuni (strain RM1221), this protein is Indole-3-glycerol phosphate synthase.